A 243-amino-acid polypeptide reads, in one-letter code: Pyridoxine 5'-phosphate synthase (243 aa).

Asn-9 is a 3-amino-2-oxopropyl phosphate binding site. Position 11 to 12 (11 to 12) interacts with 1-deoxy-D-xylulose 5-phosphate; it reads DH. A 3-amino-2-oxopropyl phosphate-binding site is contributed by Arg-20. Catalysis depends on His-45, which acts as the Proton acceptor. The 1-deoxy-D-xylulose 5-phosphate site is built by Arg-47 and His-52. Glu-72 acts as the Proton acceptor in catalysis. Residue Thr-102 coordinates 1-deoxy-D-xylulose 5-phosphate. Residue His-193 is the Proton donor of the active site. Residues Gly-194 and 215–216 each bind 3-amino-2-oxopropyl phosphate; that span reads GH.

The protein belongs to the PNP synthase family. Homooctamer; tetramer of dimers.

The protein localises to the cytoplasm. The catalysed reaction is 3-amino-2-oxopropyl phosphate + 1-deoxy-D-xylulose 5-phosphate = pyridoxine 5'-phosphate + phosphate + 2 H2O + H(+). The protein operates within cofactor biosynthesis; pyridoxine 5'-phosphate biosynthesis; pyridoxine 5'-phosphate from D-erythrose 4-phosphate: step 5/5. Catalyzes the complicated ring closure reaction between the two acyclic compounds 1-deoxy-D-xylulose-5-phosphate (DXP) and 3-amino-2-oxopropyl phosphate (1-amino-acetone-3-phosphate or AAP) to form pyridoxine 5'-phosphate (PNP) and inorganic phosphate. The chain is Pyridoxine 5'-phosphate synthase from Pseudoalteromonas translucida (strain TAC 125).